The sequence spans 315 residues: Lipoyl synthase (315 aa).

[4Fe-4S] cluster-binding residues include C62, C67, C73, C88, C92, C95, and S302. The Radical SAM core domain maps to 74–292 (FNHGTATFMI…KIALKLGFIR (219 aa)).

Belongs to the radical SAM superfamily. Lipoyl synthase family. Requires [4Fe-4S] cluster as cofactor.

Its subcellular location is the cytoplasm. It catalyses the reaction [[Fe-S] cluster scaffold protein carrying a second [4Fe-4S](2+) cluster] + N(6)-octanoyl-L-lysyl-[protein] + 2 oxidized [2Fe-2S]-[ferredoxin] + 2 S-adenosyl-L-methionine + 4 H(+) = [[Fe-S] cluster scaffold protein] + N(6)-[(R)-dihydrolipoyl]-L-lysyl-[protein] + 4 Fe(3+) + 2 hydrogen sulfide + 2 5'-deoxyadenosine + 2 L-methionine + 2 reduced [2Fe-2S]-[ferredoxin]. Its pathway is protein modification; protein lipoylation via endogenous pathway; protein N(6)-(lipoyl)lysine from octanoyl-[acyl-carrier-protein]: step 2/2. In terms of biological role, catalyzes the radical-mediated insertion of two sulfur atoms into the C-6 and C-8 positions of the octanoyl moiety bound to the lipoyl domains of lipoate-dependent enzymes, thereby converting the octanoylated domains into lipoylated derivatives. In Vesicomyosocius okutanii subsp. Calyptogena okutanii (strain HA), this protein is Lipoyl synthase.